The following is a 167-amino-acid chain: UPF0225 protein VV1_2912 (167 aa).

This sequence belongs to the UPF0225 family.

This Vibrio vulnificus (strain CMCP6) protein is UPF0225 protein VV1_2912.